The sequence spans 957 residues: SH3 domain-binding protein 4 (957 aa).

An SH3 1 domain is found at 54–113 (DNVKEVVAIKDYCPNNFTTLKFSKGEHLYVLDTSGGEWWYAHNTTEMGYIPSSYVQPLNY). Residues 312 to 449 (TSIVCRLDSS…LEPVMYVVMV (138 aa)) enclose the ZU5 domain. Residues 649–719 (TSLKYGKLLK…HAKNVLVVGK (71 aa)) form the SH3 2 domain.

Homodimer or homooligomer.

The protein localises to the membrane. The protein resides in the clathrin-coated pit. Its subcellular location is the cytoplasmic vesicle. It is found in the clathrin-coated vesicle. It localises to the nucleus. In terms of biological role, possible role in regulating endocytosis of the transferrin receptor at the plasma membrane. Alternatively, may function as a negative regulator of the amino acid-induced TOR signaling by inhibiting the formation of active Rag GTPase complexes. Preferentially binds inactive Rag GTPase complexes and prevents their interaction with the mTORC1 complex inhibiting its relocalization to lysosomes and its activation. Thereby, may indirectly regulate cell growth, proliferation and autophagy. This is SH3 domain-binding protein 4 (sh3bp4) from Xenopus tropicalis (Western clawed frog).